Here is a 521-residue protein sequence, read N- to C-terminus: Amidase 1 (521 aa).

Catalysis depends on charge relay system residues Lys-112 and Ser-187. Residues Ser-187 and 208–211 (IGGS) each bind substrate. Catalysis depends on Ser-211, which acts as the Acyl-ester intermediate.

It belongs to the amidase family.

It carries out the reaction a monocarboxylic acid amide + H2O = a monocarboxylate + NH4(+). The protein operates within xenobiotic degradation. Amidase; part of the Fusarium detoxification of benzoxazolinone cluster 1 (FDB1) involved in the degradation of benzoxazolinones produced by the host plant. Maize, wheat, and rye produce the 2 benzoxazinone phytoanticipins 2,4-dihy-droxy-7-methoxy-1,4-benzoxazin-3-one (DIMBOA) and 2,4-dihydroxy-1,4-benzoxazin-3-one (DIBOA) that, due to their inherent instability once released, spontaneously degrade to the more stable corresponding benzoxazolinones, 6-methoxy-2-benzoxazolinone (MBOA) and 2-benzoxazolinone (BOA), respectively. The first step in the detoxification of benzoxazolinones involves the hydrolysis of the cyclic ester bond of benzoxazolinones by the FDB1 cluster gamma-lactamase MBL1 to aminophenols. MBL1 is able to convert BOA into 2-aminophenol (2-AP), as well as MBOA into 5-methoxy-2-aminophenol (2-AMP). The FDB2 cluster N-malonyltransferase FDB2/NAT1 then metabolizes aminophenols via N-malonylation to non-toxic malonamic acids. FDB2/NAT1 converts 2-AP into N-(2-hydroxyphenyl) malonamic acid (HPMA) and 2-AMP into N-(2-hydroxy-4-methoxyphenyl) malonamic acid (HMPMA). The duplicated dienlactone hydrolases DLH1 and DLH2 may provide redundant function for hydrolyzing the lactone moiety in the BOA molecule. The roles of the amidases an other enzymes encoded by the 2 FDB clusters have not been identified so far. The chain is Amidase 1 from Gibberella moniliformis (strain M3125 / FGSC 7600) (Maize ear and stalk rot fungus).